Here is a 629-residue protein sequence, read N- to C-terminus: Protein fem-1 homolog B (629 aa).

6 ANK repeats span residues 47-77 (QRST…DVQQ), 89-118 (DGAT…NVNH), 122-151 (TNST…NISI), 155-184 (YDNT…DPNA), 188-217 (CGAT…AMVV), and 220-250 (HGMT…DAKS). A TPR repeat occupies 346–379 (SHPIIYRGAVYADNMQFEQCIKLWLHALQLRQKG). ANK repeat units lie at residues 485–529 (EGGS…NVNA) and 533–570 (MGNS…HTDM).

Belongs to the fem-1 family. In terms of assembly, component of a CRL2 E3 ubiquitin-protein ligase complex, also named ECS (Elongin BC-CUL2/5-SOCS-box protein) complex.

It is found in the cytoplasm. The protein resides in the nucleus. It participates in protein modification; protein ubiquitination. Functionally, substrate-recognition component of a Cul2-RING (CRL2) E3 ubiquitin-protein ligase complex of the DesCEND (destruction via C-end degrons) pathway, which recognizes a C-degron located at the extreme C terminus of target proteins, leading to their ubiquitination and degradation. The C-degron recognized by the DesCEND pathway is usually a motif of less than ten residues and can be present in full-length proteins, truncated proteins or proteolytically cleaved forms. The CRL2(FEM1B) complex specifically recognizes proteins ending with -Gly-Leu-Asp-Arg, leading to their ubiquitination and degradation. The protein is Protein fem-1 homolog B of Xenopus laevis (African clawed frog).